A 122-amino-acid chain; its full sequence is Fluoride-specific ion channel FluC 2 (122 aa).

The next 4 helical transmembrane spans lie at 3-23 (ITAISLVLFGSTFGLIFRMFI), 38-58 (TSIVNFIASFFLGILLALNLT), 62-82 (LLLLFYIGFLGCFSTFSSFIY), and 93-113 (FMHLFFHYFEVIIISFICFYL). Na(+)-binding residues include G72 and S75.

It belongs to the fluoride channel Fluc/FEX (TC 1.A.43) family.

It localises to the cell inner membrane. It carries out the reaction fluoride(in) = fluoride(out). With respect to regulation, na(+) is not transported, but it plays an essential structural role and its presence is essential for fluoride channel function. In terms of biological role, fluoride-specific ion channel. Important for reducing fluoride concentration in the cell, thus reducing its toxicity. This is Fluoride-specific ion channel FluC 2 from Prochlorococcus marinus (strain MIT 9312).